The following is a 1169-amino-acid chain: DNA-directed RNA polymerase subunit beta (1169 aa).

Belongs to the RNA polymerase beta chain family. The RNAP catalytic core consists of 2 alpha, 1 beta, 1 beta' and 1 omega subunit. When a sigma factor is associated with the core the holoenzyme is formed, which can initiate transcription. Interacts with RbpA, which partially restores Rif-inhibited transcription.

The enzyme catalyses RNA(n) + a ribonucleoside 5'-triphosphate = RNA(n+1) + diphosphate. DNA-dependent RNA polymerase catalyzes the transcription of DNA into RNA using the four ribonucleoside triphosphates as substrates. This subunit often mutates to generate rifampicin (Rif) resistance. Interaction with RbpA partially restores Rif-inhibited transcription; once the subunit is Rif-resistant however RbpA no longer stimulates transcription. This chain is DNA-directed RNA polymerase subunit beta, found in Mycolicibacterium smegmatis (strain ATCC 700084 / mc(2)155) (Mycobacterium smegmatis).